Consider the following 131-residue polypeptide: Profilin-6 (131 aa).

Belongs to the profilin family. As to quaternary structure, occurs in many kinds of cells as a complex with monomeric actin in a 1:1 ratio.

The protein localises to the cytoplasm. Its subcellular location is the cytoskeleton. In terms of biological role, binds to actin and affects the structure of the cytoskeleton. At high concentrations, profilin prevents the polymerization of actin, whereas it enhances it at low concentrations. By binding to PIP2, it inhibits the formation of IP3 and DG. The sequence is that of Profilin-6 from Hevea brasiliensis (Para rubber tree).